We begin with the raw amino-acid sequence, 219 residues long: Peptide methionine sulfoxide reductase MsrA (219 aa).

Residues 1–20 (MGLFRSPRQNLPTAADALPG) are disordered. C55 is a catalytic residue.

This sequence belongs to the MsrA Met sulfoxide reductase family.

It catalyses the reaction L-methionyl-[protein] + [thioredoxin]-disulfide + H2O = L-methionyl-(S)-S-oxide-[protein] + [thioredoxin]-dithiol. The enzyme catalyses [thioredoxin]-disulfide + L-methionine + H2O = L-methionine (S)-S-oxide + [thioredoxin]-dithiol. In terms of biological role, has an important function as a repair enzyme for proteins that have been inactivated by oxidation. Catalyzes the reversible oxidation-reduction of methionine sulfoxide in proteins to methionine. The chain is Peptide methionine sulfoxide reductase MsrA from Rhodospirillum centenum (strain ATCC 51521 / SW).